A 462-amino-acid polypeptide reads, in one-letter code: Argininosuccinate lyase (462 aa).

This sequence belongs to the lyase 1 family. Argininosuccinate lyase subfamily.

The protein localises to the cytoplasm. It carries out the reaction 2-(N(omega)-L-arginino)succinate = fumarate + L-arginine. Its pathway is amino-acid biosynthesis; L-arginine biosynthesis; L-arginine from L-ornithine and carbamoyl phosphate: step 3/3. The protein is Argininosuccinate lyase of Leuconostoc citreum (strain KM20).